The primary structure comprises 582 residues: Colicin-E9 (582 aa).

Disordered regions lie at residues 1–74 (MSGG…SGGG), 246–270 (SPGVTNNTDKDVRPAGFTQGGNTRD), 294–321 (PDQVKQRQDEENRRQQEWDATHPVEAAE), 422–489 (ADAA…IADK), and 510–542 (SKDPELSKNLNPSNKSSVSKGYSPFTPKNQQVG). Residues 20–35 (INGGPTGIGVSGGASD) are compositionally biased toward gly residues. The span at 36 to 45 (GSGWSSENNP) shows a compositional bias: low complexity. Residues 46–74 (WGGGSGSGIHWGGGSGRGNGGGNGNSGGG) show a composition bias toward gly residues. 3 stretches are compositionally biased toward basic and acidic residues: residues 297–321 (VKQRQDEENRRQQEWDATHPVEAAE), 430–453 (QERRKQKENKEKDAKDKLDKESKR), and 465–476 (PVGDKWLDDAGK). Low complexity predominate over residues 516–529 (SKNLNPSNKSSVSK). Positions 550, 575, and 579 each coordinate Zn(2+).

Belongs to the colicin/pyosin nuclease family.

Its function is as follows. This plasmid-coded bactericidal protein is an endonuclease active on both single- and double-stranded DNA but with undefined specificity. In terms of biological role, colicins are polypeptide toxins produced by and active against E.coli and closely related bacteria. This Escherichia coli protein is Colicin-E9 (col).